The primary structure comprises 398 residues: Acetate kinase (398 aa).

Mg(2+) is bound at residue N7. K14 serves as a coordination point for ATP. R85 contacts substrate. D142 acts as the Proton donor/acceptor in catalysis. Residues 202–206, 277–279, and 325–329 contribute to the ATP site; these read HLGNG, DMR, and GIGEN. E379 provides a ligand contact to Mg(2+).

It belongs to the acetokinase family. As to quaternary structure, homodimer. It depends on Mg(2+) as a cofactor. The cofactor is Mn(2+).

Its subcellular location is the cytoplasm. It carries out the reaction acetate + ATP = acetyl phosphate + ADP. Its pathway is metabolic intermediate biosynthesis; acetyl-CoA biosynthesis; acetyl-CoA from acetate: step 1/2. Catalyzes the formation of acetyl phosphate from acetate and ATP. Can also catalyze the reverse reaction. The sequence is that of Acetate kinase from Deinococcus radiodurans (strain ATCC 13939 / DSM 20539 / JCM 16871 / CCUG 27074 / LMG 4051 / NBRC 15346 / NCIMB 9279 / VKM B-1422 / R1).